A 796-amino-acid polypeptide reads, in one-letter code: YY1-associated protein 1 (796 aa).

Disordered regions lie at residues 1–45 and 463–488; these read MEEE…ATPS and IQPS…SEAP. Over residues 23–36 the composition is skewed to basic and acidic residues; that stretch reads PPDKREGSAVDPGK. A compositionally biased stretch (low complexity) spans 463–472; that stretch reads IQPSPSLQPS. The span at 473-485 shows a compositional bias: polar residues; it reads FNPGKTPAQSTHS. Ser724 carries the phosphoserine modification. A disordered region spans residues 755–776; the sequence is RQALEPLPQGIQESLNNSSPGD. Positions 765-774 are enriched in polar residues; it reads IQESLNNSSP.

In terms of assembly, interacts with YY1. Interacts with MAD2L2. Interacts with INO80. Ubiquitous. Detected in small intestine, skeletal muscle, lung, pancreas, brain, stomach, spleen, colon and heart. Detected at very low levels in healthy liver. Highly expressed in most liver carcinomas.

It localises to the cytoplasm. The protein localises to the nucleus. It is found in the nucleoplasm. The protein resides in the nucleolus. In terms of biological role, associates with the INO80 chromatin remodeling complex, which is responsible for transcriptional regulation, DNA repair, and replication. Enhances transcription activation by YY1. Plays a role in cell cycle regulation. In Homo sapiens (Human), this protein is YY1-associated protein 1.